A 468-amino-acid chain; its full sequence is MNIKTRFAPSPTGSIHIGNIRTALYSWLFARKQGGKFLLRIEDSDLQRSIDDTVELIVAGMRWLSLDWDEGPYFQTNRFSRYNSIISYMIQHDMAYKCYCSSERLESLRSNQIKNGEKPKYDGYCRFKSTDIYSSSISSYVVRFCNPQDGVVIFHDQIRGTITFNNKELDDLIIRRADGSPTYNFCVVIDDMDMQITHIIRGEEHINNTPRQINILKALRAPIPTYAHVSMILDNNLKKLSKRCGTLGIMQYRNDGFLPEAILNYLVRLGWSHGDQEIFSIEEMIKYFDLSRISKSPSILNLEKLLWLNHYYINHLPIDYVASHLSWHMHQQKINIQNGPKLTDIIKLFARRSRTLKEIVNNCLYFYIDFDLFDNKVAKDYLKPVAITPLKFLRKKFSNIVDWTPEIIKSIIIETVNEFNTSIDKIGMPLRVALTGTNCSPTLSITIHAIGQSRVLERIDQAIRYIST.

The short motif at 9 to 19 (PSPTGSIHIGN) is the 'HIGH' region element. The 'KMSKS' region signature appears at 239–243 (KLSKR). K242 is an ATP binding site.

This sequence belongs to the class-I aminoacyl-tRNA synthetase family. Glutamate--tRNA ligase type 1 subfamily. As to quaternary structure, monomer.

Its subcellular location is the cytoplasm. The enzyme catalyses tRNA(Glu) + L-glutamate + ATP = L-glutamyl-tRNA(Glu) + AMP + diphosphate. Catalyzes the attachment of glutamate to tRNA(Glu) in a two-step reaction: glutamate is first activated by ATP to form Glu-AMP and then transferred to the acceptor end of tRNA(Glu). This Blochmanniella pennsylvanica (strain BPEN) protein is Glutamate--tRNA ligase.